Here is a 476-residue protein sequence, read N- to C-terminus: Protein transport protein Sec61 subunit alpha isoform 1 (476 aa).

Residues Ala-2–Phe-28 lie on the Cytoplasmic side of the membrane. A helical membrane pass occupies residues Lys-29–Cys-46. Topologically, residues Gln-47–Gly-80 are lumenal. A helical membrane pass occupies residues Ile-81 to Ala-97. Over Lys-98 to Arg-109 the chain is Cytoplasmic. The helical transmembrane segment at Ala-110–Tyr-131 threads the bilayer. Topologically, residues Val-132–Cys-148 are lumenal. The helical transmembrane segment at Leu-149–Glu-167 threads the bilayer. The Cytoplasmic portion of the chain corresponds to Leu-168 to Ser-177. The chain crosses the membrane as a helical span at residues Gly-178 to Phe-196. Residues Ser-197–Asn-241 are Lumenal-facing. Residues Leu-242–Gln-259 traverse the membrane as a helical segment. Residues Gly-260–Tyr-285 are Cytoplasmic-facing. Residues Thr-286–Gln-306 form a helical membrane-spanning segment. Residues Met-307–Glu-356 are Lumenal-facing. The chain crosses the membrane as a helical span at residues Asp-357–Trp-379. Residues Ile-380 to Ala-420 lie on the Cytoplasmic side of the membrane. The chain crosses the membrane as a helical span at residues Ala-421–Phe-437. Residues Leu-438–Ser-443 are Lumenal-facing. Residues Gly-444–Phe-458 traverse the membrane as a helical segment. Over Glu-459 to Phe-476 the chain is Cytoplasmic.

It belongs to the SecY/SEC61-alpha family. As to quaternary structure, the SEC61 channel-forming translocon complex consists of channel-forming core components SEC61A1, SEC61B and SEC61G and different auxiliary components such as SEC62 and SEC63. The SEC61 channel associates with the multi-pass translocon (MPT) complex.

It is found in the endoplasmic reticulum membrane. Its function is as follows. Component of SEC61 channel-forming translocon complex that mediates transport of signal peptide-containing precursor polypeptides across the endoplasmic reticulum (ER). Forms a ribosome receptor and a gated pore in the ER membrane, both functions required for cotranslational translocation of nascent polypeptides. May cooperate with auxiliary protein SEC62, SEC63 and HSPA5/BiP to enable post-translational transport of small presecretory proteins. The SEC61 channel is also involved in ER membrane insertion of transmembrane proteins: it mediates membrane insertion of the first few transmembrane segments of proteins, while insertion of subsequent transmembrane regions of multi-pass membrane proteins is mediated by the multi-pass translocon (MPT) complex. The SEC61 channel cooperates with the translocating protein TRAM1 to import nascent proteins into the ER. Controls the passive efflux of calcium ions from the ER lumen to the cytosol through SEC61 channel, contributing to the maintenance of cellular calcium homeostasis. Plays a critical role in nephrogenesis, specifically at pronephros stage. In Canis lupus familiaris (Dog), this protein is Protein transport protein Sec61 subunit alpha isoform 1 (SEC61A1).